Reading from the N-terminus, the 83-residue chain is Neurotoxin LmNaTx3 (83 aa).

A signal peptide spans methionine 1 to serine 21. The LCN-type CS-alpha/beta domain occupies lysine 22–cysteine 83. 4 disulfides stabilise this stretch: cysteine 32–cysteine 83, cysteine 36–cysteine 59, cysteine 45–cysteine 64, and cysteine 49–cysteine 66.

The protein belongs to the long (4 C-C) scorpion toxin superfamily. Sodium channel inhibitor family. Alpha subfamily. Expressed by the venom gland.

Its subcellular location is the secreted. Its function is as follows. Binds voltage-independently at site-3 of voltage-gated sodium channels (Nav) and inhibits the inactivation of the activated channels, thereby blocking neuronal transmission. The protein is Neurotoxin LmNaTx3 of Lychas mucronatus (Chinese swimming scorpion).